Consider the following 339-residue polypeptide: Fructose-1,6-bisphosphatase class 1 (339 aa).

The Mg(2+) site is built by glutamate 91, aspartate 113, leucine 115, and aspartate 116. Residues 116 to 119 (DGSS), asparagine 208, and lysine 274 contribute to the substrate site. Glutamate 280 is a binding site for Mg(2+).

The protein belongs to the FBPase class 1 family. As to quaternary structure, homotetramer. The cofactor is Mg(2+).

The protein localises to the cytoplasm. The catalysed reaction is beta-D-fructose 1,6-bisphosphate + H2O = beta-D-fructose 6-phosphate + phosphate. The protein operates within carbohydrate biosynthesis; gluconeogenesis. The sequence is that of Fructose-1,6-bisphosphatase class 1 from Cupriavidus pinatubonensis (strain JMP 134 / LMG 1197) (Cupriavidus necator (strain JMP 134)).